A 1423-amino-acid chain; its full sequence is Histone-lysine N-methyltransferase ATXR7 (1423 aa).

A GYF domain is found at 263-312 (HACWFLVDGEGRNHGPHSILELFSWQQHGYVSDAALIRDGENKLRPITLA). 3 disordered regions span residues 923 to 960 (CKDH…EGTK), 1057 to 1097 (CSIS…SSTD), and 1115 to 1158 (LPCH…GRPK). Basic residues predominate over residues 936 to 949 (QKVKKAHTSKLKRK). Basic and acidic residues predominate over residues 950 to 959 (NLSDARDEGT). A compositionally biased stretch (polar residues) spans 1057–1071 (CSISQKGRKSSQSSI). 2 stretches are compositionally biased toward basic and acidic residues: residues 1115–1124 (LPCHTSDKLQ) and 1140–1157 (HTTE…DGRP). Residues 1266-1383 (KHLRFQQSKI…AGEEISYNYK (118 aa)) form the SET domain. Position 1382 (Y1382) interacts with S-adenosyl-L-methionine.

It belongs to the class V-like SAM-binding methyltransferase superfamily. Histone-lysine methyltransferase family. TRX/MLL subfamily. In terms of tissue distribution, expressed in the shoot and root apices, vascular tissues and mesophyll cells of rosette leaves.

The protein resides in the nucleus. The catalysed reaction is L-lysyl(4)-[histone H3] + 3 S-adenosyl-L-methionine = N(6),N(6),N(6)-trimethyl-L-lysyl(4)-[histone H3] + 3 S-adenosyl-L-homocysteine + 3 H(+). It catalyses the reaction L-lysyl(36)-[histone H3] + 2 S-adenosyl-L-methionine = N(6),N(6)-dimethyl-L-lysyl(36)-[histone H3] + 2 S-adenosyl-L-homocysteine + 2 H(+). In terms of biological role, histone methyltransferase involved in regulation of flowering time. Required for the expression of the flowering repressors FLC and MADS-box genes of the MAF family. Required for histone H3 dimethylation on 'Lys-36' H3K36me2 at the FLC locus. Required for histone H3 trimethylation on 'Lys-4' (H3K4me3) at the FLC locus. Prevents trimethylation on 'Lys-27' (H3K27me3) at the same locus. Involved in the control of seed dormancy and germination. This is Histone-lysine N-methyltransferase ATXR7 from Arabidopsis thaliana (Mouse-ear cress).